Here is a 506-residue protein sequence, read N- to C-terminus: Ecdysteroid UDP-glucosyltransferase (506 aa).

The N-terminal stretch at 1–18 (MTILCWLALLSTLTAVNA) is a signal peptide.

Belongs to the UDP-glycosyltransferase family. Glycosylated.

Functionally, catalyzes the transfer of glucose from UDP-glucose to ecdysteroids which are insect molting hormones. Acts on the host at the organismal level to block its development, thereby increasing the yield of progeny virus. In Lepidoptera (butterflies and moths), this protein is Ecdysteroid UDP-glucosyltransferase (EGT).